The sequence spans 145 residues: Mannitol-specific phosphotransferase enzyme IIA component (145 aa).

The 141-residue stretch at 4–144 (PILKKENIVL…EEILSILNEV (141 aa)) folds into the PTS EIIA type-2 domain. The active-site Tele-phosphohistidine intermediate is histidine 64. Histidine 64 carries the phosphohistidine; by HPr modification.

It is found in the cytoplasm. The phosphoenolpyruvate-dependent sugar phosphotransferase system (sugar PTS), a major carbohydrate active transport system, catalyzes the phosphorylation of incoming sugar substrates concomitantly with their translocation across the cell membrane. The enzyme II CmtAB PTS system is involved in D-mannitol transport. This Geobacillus stearothermophilus (Bacillus stearothermophilus) protein is Mannitol-specific phosphotransferase enzyme IIA component.